The following is a 185-amino-acid chain: Lactoylglutathione lyase (185 aa).

The segment at M1–A22 is disordered. Positions I27–L174 constitute a VOC domain. Substrate contacts are provided by Q30 and R34. Q30 serves as a coordination point for Zn(2+). Residue E96 coordinates Zn(2+). Residues N100, R120, H124, and K154–M155 each bind substrate. H124 contacts Zn(2+). E170 is a Zn(2+) binding site. The Proton donor/acceptor role is filled by E170.

The protein belongs to the glyoxalase I family. Requires Zn(2+) as cofactor.

The catalysed reaction is (R)-S-lactoylglutathione = methylglyoxal + glutathione. The protein operates within secondary metabolite metabolism; methylglyoxal degradation; (R)-lactate from methylglyoxal: step 1/2. Its function is as follows. Catalyzes the conversion of hemimercaptal, formed from methylglyoxal and glutathione, to S-lactoylglutathione. The protein is Lactoylglutathione lyase of Arabidopsis thaliana (Mouse-ear cress).